The chain runs to 391 residues: Phosphopentomutase (391 aa).

Aspartate 14 provides a ligand contact to Mn(2+). The segment at 61–88 (IQGVPPDPAPTAFHGRMAERSEGKDTTT) is disordered. The span at 76 to 87 (RMAERSEGKDTT) shows a compositional bias: basic and acidic residues. 5 residues coordinate Mn(2+): aspartate 286, histidine 291, aspartate 327, histidine 328, and histidine 339.

The protein belongs to the phosphopentomutase family. Mn(2+) is required as a cofactor.

Its subcellular location is the cytoplasm. It catalyses the reaction 2-deoxy-alpha-D-ribose 1-phosphate = 2-deoxy-D-ribose 5-phosphate. The catalysed reaction is alpha-D-ribose 1-phosphate = D-ribose 5-phosphate. It functions in the pathway carbohydrate degradation; 2-deoxy-D-ribose 1-phosphate degradation; D-glyceraldehyde 3-phosphate and acetaldehyde from 2-deoxy-alpha-D-ribose 1-phosphate: step 1/2. Functionally, isomerase that catalyzes the conversion of deoxy-ribose 1-phosphate (dRib-1-P) and ribose 1-phosphate (Rib-1-P) to deoxy-ribose 5-phosphate (dRib-5-P) and ribose 5-phosphate (Rib-5-P), respectively. The protein is Phosphopentomutase of Anaeromyxobacter dehalogenans (strain 2CP-C).